The sequence spans 219 residues: Uracil-DNA glycosylase (219 aa).

Asp-64 functions as the Proton acceptor in the catalytic mechanism.

It belongs to the uracil-DNA glycosylase (UDG) superfamily. UNG family.

It is found in the cytoplasm. The enzyme catalyses Hydrolyzes single-stranded DNA or mismatched double-stranded DNA and polynucleotides, releasing free uracil.. Its function is as follows. Excises uracil residues from the DNA which can arise as a result of misincorporation of dUMP residues by DNA polymerase or due to deamination of cytosine. The polypeptide is Uracil-DNA glycosylase (Leuconostoc citreum (strain KM20)).